The sequence spans 438 residues: Aspartate--tRNA(Asp/Asn) ligase (438 aa).

Glutamate 176 is an L-aspartate binding site. The segment at 198–201 is aspartate; that stretch reads QLYK. An L-aspartate-binding site is contributed by arginine 220. ATP-binding positions include 220 to 222, 228 to 230, and glutamate 361; these read RAE and RHL. 2 residues coordinate Mg(2+): glutamate 361 and serine 364. L-aspartate-binding residues include serine 364 and arginine 368. Residue 409 to 412 participates in ATP binding; that stretch reads GADR.

The protein belongs to the class-II aminoacyl-tRNA synthetase family. Type 2 subfamily. Homodimer. It depends on Mg(2+) as a cofactor.

The protein resides in the cytoplasm. The catalysed reaction is tRNA(Asx) + L-aspartate + ATP = L-aspartyl-tRNA(Asx) + AMP + diphosphate. In terms of biological role, aspartyl-tRNA synthetase with relaxed tRNA specificity since it is able to aspartylate not only its cognate tRNA(Asp) but also tRNA(Asn). Reaction proceeds in two steps: L-aspartate is first activated by ATP to form Asp-AMP and then transferred to the acceptor end of tRNA(Asp/Asn). The sequence is that of Aspartate--tRNA(Asp/Asn) ligase from Methanococcus vannielii (strain ATCC 35089 / DSM 1224 / JCM 13029 / OCM 148 / SB).